The sequence spans 349 residues: Nitrilase, bromoxynil-specific (349 aa).

The CN hydrolase domain maps to 5–274 (FKAAAVQAEP…EGIVYAEIDL (270 aa)). E45 functions as the Proton acceptor in the catalytic mechanism. K127 acts as the Proton donor in catalysis. Catalysis depends on C161, which acts as the Nucleophile.

It belongs to the carbon-nitrogen hydrolase superfamily. Nitrilase family. As to quaternary structure, homodimer.

It carries out the reaction a nitrile + 2 H2O = a carboxylate + NH4(+). Functionally, specific for the herbicide bromoxynil (3,5-dibromo-4-hydroxybenzonitrile); converts it to its metabolite 3,5-dibromo-4-hydroxybenzoic acid. The polypeptide is Nitrilase, bromoxynil-specific (bxn) (Klebsiella pneumoniae subsp. ozaenae).